A 101-amino-acid chain; its full sequence is Urease subunit beta (101 aa).

Belongs to the urease beta subunit family. In terms of assembly, heterotrimer of UreA (gamma), UreB (beta) and UreC (alpha) subunits. Three heterotrimers associate to form the active enzyme.

It is found in the cytoplasm. It catalyses the reaction urea + 2 H2O + H(+) = hydrogencarbonate + 2 NH4(+). It participates in nitrogen metabolism; urea degradation; CO(2) and NH(3) from urea (urease route): step 1/1. The polypeptide is Urease subunit beta (Variovorax paradoxus (strain S110)).